The chain runs to 442 residues: MSLFGSANFGLPRLKPLPSKRSHVVSVLDIGSTKVVCMIGRLTPRAESQILPGRTHSIEVIGIGHQKSRGVKNGVIADLDAVESVVRLAVDAAERMAGLTIDSLIVNVSAGRLQSDVYTATIDLGGQEVEANDLKKVLAAAGHQSLRTDRAILHSLPTGFSLDGERGIRDPLAMFGDVLGVDMHVLTAERPALKNLELCVNRAHLSVEGMVATPYASGLAALVDDEVELGCAAIDMGGGTTTISVFAEGKLVHADAVGLGGHHVTTDLARGLSTRIEDAERLKVVHGSALPNSADERDIISVPPIGEDDRDQPTHVPRALVSRIVRARIEETLELIRDRIQRSGFSPIVGKRIVLTGGASQLTGLPEAARRILARNVRIGRPLGVSGLPAAAKGPAFSTAVGLMIYPQVADLETHAAGSGMFSTLGGNSRFARMGQWLKESF.

This sequence belongs to the FtsA/MreB family. Self-interacts. Interacts with FtsZ.

Its subcellular location is the cell inner membrane. Its function is as follows. Cell division protein that is involved in the assembly of the Z ring. May serve as a membrane anchor for the Z ring. The chain is Cell division protein FtsA from Rhizobium meliloti (strain 1021) (Ensifer meliloti).